A 338-amino-acid polypeptide reads, in one-letter code: MGLKINRPRRGSMGVYPRKRAADIVPRVRTWPEVNLGKPALLGFAAYKAGMLHAVVVEDRPTSPLYGKEVVRPVTVLDAPPLFIWGFRLYTLDPTNGYRRSIAEVWAPELPAYIRRVLTLPEKADVDKQMKKVEEFKDVAVDVRALVATQPHLSGIGKKTPELLEIPIGGVPSVDERIKFAVSLLGKTVSPKEVFTAGQLVDVIAVTKGKGYQGVIKRFGVTILPRWHKHRKGHRRTGTIGPQAPALMFTQPRPGQMGFHQRTEYNKRVVKIGDNGAEITPKSGFLHYGVIRGPYILIQGTVPGAKKRLVVLRHPARPPKKAPPAAEPQVVWLSSQSI.

The disordered stretch occupies residues 230-253 (HRKGHRRTGTIGPQAPALMFTQPR).

This sequence belongs to the universal ribosomal protein uL3 family. Part of the 50S ribosomal subunit. Forms a cluster with proteins L14 and L24e.

In terms of biological role, one of the primary rRNA binding proteins, it binds directly near the 3'-end of the 23S rRNA, where it nucleates assembly of the 50S subunit. The chain is Large ribosomal subunit protein uL3 from Pyrobaculum neutrophilum (strain DSM 2338 / JCM 9278 / NBRC 100436 / V24Sta) (Thermoproteus neutrophilus).